The primary structure comprises 212 residues: MNSIEFPLLDQTTQNSVISTTLNDFSNWSRLSSLWPLLYGTSCCFIEFASLIGSRFDFDRYGLVPRSSPRQADLILTAGTVTMKMAPSLVRLYEQMPEPKYVIAMGACTITGGMFSTDSYSTVRGVDKLIPVDVYLPGCPPKPEAIIDAITKLRKKISREIYEDPISFQRENRCFTINHKFHVGYSTYTGNYGQEFFYQPPSTSEIASDTFF.

[4Fe-4S] cluster contacts are provided by Cys-43, Cys-44, Cys-108, and Cys-139.

It belongs to the complex I 20 kDa subunit family. NDH is composed of at least 16 different subunits, 5 of which are encoded in the nucleus. It depends on [4Fe-4S] cluster as a cofactor.

The protein resides in the plastid. Its subcellular location is the chloroplast thylakoid membrane. The catalysed reaction is a plastoquinone + NADH + (n+1) H(+)(in) = a plastoquinol + NAD(+) + n H(+)(out). The enzyme catalyses a plastoquinone + NADPH + (n+1) H(+)(in) = a plastoquinol + NADP(+) + n H(+)(out). In terms of biological role, NDH shuttles electrons from NAD(P)H:plastoquinone, via FMN and iron-sulfur (Fe-S) centers, to quinones in the photosynthetic chain and possibly in a chloroplast respiratory chain. The immediate electron acceptor for the enzyme in this species is believed to be plastoquinone. Couples the redox reaction to proton translocation, and thus conserves the redox energy in a proton gradient. The protein is NAD(P)H-quinone oxidoreductase subunit K, chloroplastic of Phaseolus vulgaris (Kidney bean).